Here is a 338-residue protein sequence, read N- to C-terminus: Lipoate-protein ligase A (338 aa).

Residues 29-216 (PATQRVLFLW…AFFAHYGERV (188 aa)) form the BPL/LPL catalytic domain. ATP-binding positions include R71, 76–79 (GAVF), and K134. K134 is a (R)-lipoate binding site.

This sequence belongs to the LplA family. In terms of assembly, monomer.

It is found in the cytoplasm. It catalyses the reaction L-lysyl-[lipoyl-carrier protein] + (R)-lipoate + ATP = N(6)-[(R)-lipoyl]-L-lysyl-[lipoyl-carrier protein] + AMP + diphosphate + H(+). It participates in protein modification; protein lipoylation via exogenous pathway; protein N(6)-(lipoyl)lysine from lipoate: step 1/2. It functions in the pathway protein modification; protein lipoylation via exogenous pathway; protein N(6)-(lipoyl)lysine from lipoate: step 2/2. Functionally, catalyzes both the ATP-dependent activation of exogenously supplied lipoate to lipoyl-AMP and the transfer of the activated lipoyl onto the lipoyl domains of lipoate-dependent enzymes. This is Lipoate-protein ligase A from Salmonella arizonae (strain ATCC BAA-731 / CDC346-86 / RSK2980).